Reading from the N-terminus, the 481-residue chain is UDP-glycosyltransferase 71K2 (481 aa).

Residues serine 285, 350 to 351, 368 to 376, and 390 to 393 each bind UDP-alpha-D-glucose; these read WA, HCGWNSILE, and YAEQ.

This sequence belongs to the UDP-glycosyltransferase family.

Functionally, glycosyltransferase that possesses chalcone and flavonol 2'-O-glycosyltransferase activity. Converts phloretin to phlorizin (phloretin 2'-O-glucoside), a potent antioxidant. Possesses glycosyltransferase activity toward quercetin, isoliquiritigenin, butein and caffeic acid. The polypeptide is UDP-glycosyltransferase 71K2 (Pyrus communis (Pear)).